Consider the following 311-residue polypeptide: tRNA N6-adenosine threonylcarbamoyltransferase (311 aa).

Residues His108 and His112 each contribute to the Fe cation site. Residues 130-134 (LVSGG), Asp163, Gly176, Asp180, and Asn270 contribute to the substrate site. Fe cation is bound at residue Asp294.

The protein belongs to the KAE1 / TsaD family. It depends on Fe(2+) as a cofactor.

It is found in the cytoplasm. The enzyme catalyses L-threonylcarbamoyladenylate + adenosine(37) in tRNA = N(6)-L-threonylcarbamoyladenosine(37) in tRNA + AMP + H(+). In terms of biological role, required for the formation of a threonylcarbamoyl group on adenosine at position 37 (t(6)A37) in tRNAs that read codons beginning with adenine. Is involved in the transfer of the threonylcarbamoyl moiety of threonylcarbamoyl-AMP (TC-AMP) to the N6 group of A37, together with TsaE and TsaB. TsaD likely plays a direct catalytic role in this reaction. This chain is tRNA N6-adenosine threonylcarbamoyltransferase, found in Metamycoplasma arthritidis (strain 158L3-1) (Mycoplasma arthritidis).